Reading from the N-terminus, the 144-residue chain is Large ribosomal subunit protein uL15 (144 aa).

Residues 1–62 (MELNNLKPAE…GQMPLQRRLP (62 aa)) are disordered. Gly residues predominate over residues 21–31 (RGIGSGLGKTA).

It belongs to the universal ribosomal protein uL15 family. In terms of assembly, part of the 50S ribosomal subunit.

Binds to the 23S rRNA. This is Large ribosomal subunit protein uL15 from Paraburkholderia phymatum (strain DSM 17167 / CIP 108236 / LMG 21445 / STM815) (Burkholderia phymatum).